Here is a 77-residue protein sequence, read N- to C-terminus: Small ribosomal subunit protein bS16 (77 aa).

The protein belongs to the bacterial ribosomal protein bS16 family.

In Wolinella succinogenes (strain ATCC 29543 / DSM 1740 / CCUG 13145 / JCM 31913 / LMG 7466 / NCTC 11488 / FDC 602W) (Vibrio succinogenes), this protein is Small ribosomal subunit protein bS16.